We begin with the raw amino-acid sequence, 439 residues long: MEKVKIIGGGLAGSEAAWQLAKRKIPVEIYEMRPVVTTPVHKTEYLAELVCSNSFKSTELTNASGLLKEEMKKLDSLLLRVAEETRVPAGVALAVDRELFAKRVQEILLESPYVTVIREEVKKIPEEGIVIVATGPLTSSDFAEHLIEILDTDSLYFYDAVSPIIYADSINYEKVFSASRYGKGEEAYLNCPMTKEEYERFVEELVNAETVESHYPGEEKFFEGCLPIEVLARRGIDTLRYGPMKPVGLIDPKTGKEPYAVVQLRPENIQKTLYSMVGFQTRLKFQEQRRIFRMIPGLENAEFARYGVMHRNTYFYAPKFLKPTLQFIKNERVFFAGQLIGVEGYMESAAMGIVAGINAARLYKGKPLIILPPTTMIGALISYVTTKVPVKQFQPMNANWGILLPLERPVKDKKLRNRLLAERALRDLDDVIRRFAINV.

An FAD-binding site is contributed by 8-13 (GGGLAG).

The protein belongs to the MnmG family. TrmFO subfamily. The cofactor is FAD.

The protein localises to the cytoplasm. It carries out the reaction uridine(54) in tRNA + (6R)-5,10-methylene-5,6,7,8-tetrahydrofolate + NADH + H(+) = 5-methyluridine(54) in tRNA + (6S)-5,6,7,8-tetrahydrofolate + NAD(+). It catalyses the reaction uridine(54) in tRNA + (6R)-5,10-methylene-5,6,7,8-tetrahydrofolate + NADPH + H(+) = 5-methyluridine(54) in tRNA + (6S)-5,6,7,8-tetrahydrofolate + NADP(+). Catalyzes the folate-dependent formation of 5-methyl-uridine at position 54 (M-5-U54) in all tRNAs. This is Methylenetetrahydrofolate--tRNA-(uracil-5-)-methyltransferase TrmFO from Dictyoglomus thermophilum (strain ATCC 35947 / DSM 3960 / H-6-12).